The sequence spans 222 residues: Deoxyribose-phosphate aldolase (222 aa).

The Proton donor/acceptor role is filled by aspartate 90. The active-site Schiff-base intermediate with acetaldehyde is lysine 152. Lysine 181 serves as the catalytic Proton donor/acceptor.

The protein belongs to the DeoC/FbaB aldolase family. DeoC type 1 subfamily.

Its subcellular location is the cytoplasm. It catalyses the reaction 2-deoxy-D-ribose 5-phosphate = D-glyceraldehyde 3-phosphate + acetaldehyde. It functions in the pathway carbohydrate degradation; 2-deoxy-D-ribose 1-phosphate degradation; D-glyceraldehyde 3-phosphate and acetaldehyde from 2-deoxy-alpha-D-ribose 1-phosphate: step 2/2. Functionally, catalyzes a reversible aldol reaction between acetaldehyde and D-glyceraldehyde 3-phosphate to generate 2-deoxy-D-ribose 5-phosphate. The protein is Deoxyribose-phosphate aldolase of Pectobacterium carotovorum subsp. carotovorum (strain PC1).